The primary structure comprises 172 residues: Centrin-1 (172 aa).

Residues methionine 1 to glutamine 31 form a disordered region. EF-hand domains are found at residues aspartate 28–glutamate 63, proline 64–glutamate 99, aspartate 101–asparagine 136, and leucine 137–tyrosine 172. Residues aspartate 41, aspartate 43, serine 45, threonine 47, and glutamate 52 each coordinate Ca(2+). 5 residues coordinate Ca(2+): aspartate 150, aspartate 152, aspartate 154, glutamate 156, and glutamate 161.

This sequence belongs to the centrin family. Monomer. Interacts with CIMAP3. Interacts with USP49.

The protein localises to the cytoplasm. It is found in the cytoskeleton. It localises to the microtubule organizing center. The protein resides in the centrosome. Its subcellular location is the cell projection. The protein localises to the cilium. Functionally, plays a fundamental role in microtubule-organizing center structure and function. Plays a role in sperm cilia formation. The chain is Centrin-1 from Homo sapiens (Human).